A 184-amino-acid polypeptide reads, in one-letter code: RNA 2',3'-cyclic phosphodiesterase (184 aa).

The Proton donor role is filled by H42. 2 short sequence motifs (HXTX) span residues 42–45 (HFTL) and 127–130 (HLTV). The active-site Proton acceptor is the H127.

This sequence belongs to the 2H phosphoesterase superfamily. ThpR family.

The catalysed reaction is a 3'-end 2',3'-cyclophospho-ribonucleotide-RNA + H2O = a 3'-end 2'-phospho-ribonucleotide-RNA + H(+). In terms of biological role, hydrolyzes RNA 2',3'-cyclic phosphodiester to an RNA 2'-phosphomonoester. In Methanothermobacter thermautotrophicus (strain ATCC 29096 / DSM 1053 / JCM 10044 / NBRC 100330 / Delta H) (Methanobacterium thermoautotrophicum), this protein is RNA 2',3'-cyclic phosphodiesterase.